We begin with the raw amino-acid sequence, 434 residues long: Trigger factor (434 aa).

The PPIase FKBP-type domain occupies 161–246; it reads EDRVTIDFTG…LKKVEERELP (86 aa).

Belongs to the FKBP-type PPIase family. Tig subfamily.

The protein resides in the cytoplasm. It carries out the reaction [protein]-peptidylproline (omega=180) = [protein]-peptidylproline (omega=0). In terms of biological role, involved in protein export. Acts as a chaperone by maintaining the newly synthesized protein in an open conformation. Functions as a peptidyl-prolyl cis-trans isomerase. The chain is Trigger factor from Pectobacterium carotovorum subsp. carotovorum (strain PC1).